The chain runs to 104 residues: Large ribosomal subunit protein uL24 (104 aa).

The protein belongs to the universal ribosomal protein uL24 family. Part of the 50S ribosomal subunit.

One of two assembly initiator proteins, it binds directly to the 5'-end of the 23S rRNA, where it nucleates assembly of the 50S subunit. Functionally, one of the proteins that surrounds the polypeptide exit tunnel on the outside of the subunit. In Shewanella pealeana (strain ATCC 700345 / ANG-SQ1), this protein is Large ribosomal subunit protein uL24.